The following is an 871-amino-acid chain: Coatomer subunit gamma-2 (871 aa).

Positions 1–11 (MIKKFDKKDEE) are enriched in basic and acidic residues. The interval 1 to 21 (MIKKFDKKDEESGSGSNPFQH) is disordered. HEAT repeat units lie at residues 64–101 (TEATEAFFAMTRLFQSNDQTLRRMCYLTIKEMATISED), 283–320 (RELAPAVSVLQLFCSSPKPALRYAAVRTLNKVAMKHPS), 321–355 (AVTACNLDLENLITDSNRSIATLAITTLLKTGSES), 356–392 (SVDRLMKQISSFVSEISDEFKVVVVQAISALCQKYPR), 395–430 (SVMMTFLSNMLRDDGGFEYKRAIVDCIISIVEENPE), and 467–504 (PVPSKYIRFIFNRVVLENEAVRAAAVSALAKFGAQNES). Threonine 594 carries the phosphothreonine modification.

This sequence belongs to the COPG family. In terms of assembly, oligomeric complex. Binds to CDC42. Interacts with JAGN1. Interacts with TMED10 (via cytoplasmic domain).

Its subcellular location is the cytoplasm. It is found in the cytosol. It localises to the golgi apparatus membrane. The protein resides in the cytoplasmic vesicle. The protein localises to the COPI-coated vesicle membrane. The coatomer is a cytosolic protein complex that binds to dilysine motifs and reversibly associates with Golgi non-clathrin-coated vesicles, which further mediate biosynthetic protein transport from the ER, via the Golgi up to the trans Golgi network. Coatomer complex is required for budding from Golgi membranes, and is essential for the retrograde Golgi-to-ER transport of dilysine-tagged proteins. In mammals, the coatomer can only be recruited by membranes associated to ADP-ribosylation factors (ARFs), which are small GTP-binding proteins; the complex also influences the Golgi structural integrity, as well as the processing, activity, and endocytic recycling of LDL receptors. This Homo sapiens (Human) protein is Coatomer subunit gamma-2 (COPG2).